The primary structure comprises 362 residues: Tryptophan 2,3-dioxygenase (362 aa).

Residues 40-44 and R111 each bind substrate; that span reads FIIVH. H297 contacts heme. T311 is a binding site for substrate.

The protein belongs to the tryptophan 2,3-dioxygenase family. Homotetramer. The cofactor is heme.

The catalysed reaction is L-tryptophan + O2 = N-formyl-L-kynurenine. It participates in amino-acid degradation; L-tryptophan degradation via kynurenine pathway; L-kynurenine from L-tryptophan: step 1/2. In terms of biological role, heme-dependent dioxygenase that catalyzes the oxidative cleavage of the L-tryptophan (L-Trp) pyrrole ring and converts L-tryptophan to N-formyl-L-kynurenine. Catalyzes the oxidative cleavage of the indole moiety. The polypeptide is Tryptophan 2,3-dioxygenase (Alteromonas mediterranea (strain DSM 17117 / CIP 110805 / LMG 28347 / Deep ecotype)).